The following is a 400-amino-acid chain: Argininosuccinate synthase (400 aa).

9-17 (AYSGGLDTS) contacts ATP. Y87 is a binding site for L-citrulline. G117 contributes to the ATP binding site. L-aspartate-binding residues include T119, N123, and D124. Residue N123 participates in L-citrulline binding. Residues R127, S176, S185, E261, and Y273 each coordinate L-citrulline.

Belongs to the argininosuccinate synthase family. Type 1 subfamily. In terms of assembly, homotetramer.

The protein resides in the cytoplasm. The enzyme catalyses L-citrulline + L-aspartate + ATP = 2-(N(omega)-L-arginino)succinate + AMP + diphosphate + H(+). It functions in the pathway amino-acid biosynthesis; L-arginine biosynthesis; L-arginine from L-ornithine and carbamoyl phosphate: step 2/3. This Chlorobium luteolum (strain DSM 273 / BCRC 81028 / 2530) (Pelodictyon luteolum) protein is Argininosuccinate synthase.